The following is a 348-amino-acid chain: Rhodopsin (348 aa).

An N-acetylmethionine modification is found at Met-1. The Extracellular segment spans residues 1–36; that stretch reads MNGTEGPNFYVPFSNITGVVRSPFEQPQYYLAEPWQ. N-linked (GlcNAc...) asparagine glycans are attached at residues Asn-2 and Asn-15. The chain crosses the membrane as a helical span at residues 37 to 61; sequence FSMLAAYMFLLIVLGFPINFLTLYV. Residues 62-73 are Cytoplasmic-facing; the sequence is TVQHKKLRTPLN. The chain crosses the membrane as a helical span at residues 74 to 96; the sequence is YILLNLAVADLFMVFGGFTTTLY. The Extracellular segment spans residues 97 to 110; it reads TSLHGYFVFGPTGC. A disulfide bridge links Cys-110 with Cys-187. A helical transmembrane segment spans residues 111–133; the sequence is NLEGFFATLGGEIGLWSLVVLAI. The 'Ionic lock' involved in activated form stabilization signature appears at 134–136; it reads ERY. Residues 134 to 152 are Cytoplasmic-facing; that stretch reads ERYVVVCKPMSNFRFGENH. Residues 153 to 173 form a helical membrane-spanning segment; sequence AIMGVAFTWVMALACAAPPLV. Residues 174 to 202 lie on the Extracellular side of the membrane; sequence GWSRYIPEGMQCSCGIDYYTLKPEVNNES. Residue Glu-201 participates in Zn(2+) binding. A helical membrane pass occupies residues 203 to 224; it reads FVIYMFVVHFTIPMIVIFFCYG. Topologically, residues 225-252 are cytoplasmic; that stretch reads QLVFTVKEAAAQQQESATTQKAEKEVTR. Residues 253–274 form a helical membrane-spanning segment; the sequence is MVIIMVIFFLICWLPYASVAMY. Topologically, residues 275–286 are extracellular; it reads IFTHQGSNFGPI. Gln-279 contacts Zn(2+). A helical membrane pass occupies residues 287-308; the sequence is FMTLPAFFAKTASIYNPIIYIM. Lys-296 is subject to N6-(retinylidene)lysine. Residues 309-348 are Cytoplasmic-facing; that stretch reads MNKQFRNCMLTSLCCGKNPLGDDEASATASKTETSQVAPA. 2 S-palmitoyl cysteine lipidation sites follow: Cys-322 and Cys-323. Residues 330–348 are interaction with SAG; the sequence is DDEASATASKTETSQVAPA. At Ser-334 the chain carries Phosphoserine. Thr-336 carries the post-translational modification Phosphothreonine. Ser-338 carries the post-translational modification Phosphoserine. Phosphothreonine is present on residues Thr-340 and Thr-342. The residue at position 343 (Ser-343) is a Phosphoserine.

It belongs to the G-protein coupled receptor 1 family. Opsin subfamily. Homodimer. May form a complex composed of RHO, GRK1 and RCVRN in a Ca(2+)-dependent manner; RCVRN prevents the interaction between GRK1 and RHO. Interacts with GRK1. Interacts (phosphorylated form) with SAG. Interacts with GNAT1. Interacts with GNAT3. SAG and G-proteins compete for a common binding site. Interacts with PRCD; the interaction promotes PRCD stability. Forms a complex with ASAP1 and ARF4. Forms a complex with ASAP1, RAB11A, Rabin8/RAB3IP, ARF4 and RAB11FIP3; the complex regulates Golgi-to-cilia rhodopsin/RHO transport in photoreceptors. Phosphorylated on some or all of the serine and threonine residues present in the C-terminal region. In terms of processing, contains one covalently linked retinal chromophore. Upon light absorption, the covalently bound 11-cis-retinal is converted to all-trans-retinal. After hydrolysis of the Schiff base and release of the covalently bound all-trans-retinal, active rhodopsin is regenerated by binding of a fresh molecule of 11-cis-retinal.

Its subcellular location is the membrane. The protein resides in the cell projection. It is found in the cilium. The protein localises to the photoreceptor outer segment. In terms of biological role, photoreceptor required for image-forming vision at low light intensity. Required for photoreceptor cell viability after birth. Light-induced isomerization of 11-cis to all-trans retinal triggers a conformational change that activates signaling via G-proteins. Subsequent receptor phosphorylation mediates displacement of the bound G-protein alpha subunit by the arrestin SAG and terminates signaling. This Rattus norvegicus (Rat) protein is Rhodopsin (Rho).